The following is a 303-amino-acid chain: Pseudouridine-5'-phosphate glycosidase (303 aa).

The Proton donor role is filled by E23. Residues K85 and V105 each contribute to the substrate site. D137 lines the Mn(2+) pocket. 139–141 (SQD) is a binding site for substrate. K158 functions as the Nucleophile in the catalytic mechanism.

This sequence belongs to the pseudouridine-5'-phosphate glycosidase family. In terms of assembly, homotrimer. Mn(2+) serves as cofactor.

It carries out the reaction D-ribose 5-phosphate + uracil = psi-UMP + H2O. Catalyzes the reversible cleavage of pseudouridine 5'-phosphate (PsiMP) to ribose 5-phosphate and uracil. Functions biologically in the cleavage direction, as part of a pseudouridine degradation pathway. The sequence is that of Pseudouridine-5'-phosphate glycosidase from Myxococcus xanthus (strain DK1622).